Here is a 528-residue protein sequence, read N- to C-terminus: Tyrosine--tRNA ligase, cytoplasmic (528 aa).

Tyr39 is an L-tyrosine binding site. The short motif at 44–52 is the 'HIGH' region element; the sequence is TTGKPHVAY. L-tyrosine is bound by residues Tyr166, Gln170, Asp173, and Gln188. The 'KMSKS' region signature appears at 222 to 226; it reads KMSSS. A Nuclear localization signal motif is present at residues 242–247; the sequence is KKKLKK. The disordered stretch occupies residues 332–362; sequence EMKKLSNDAYPDASKQKSVPKGSTKNSGTEE. In terms of domain architecture, tRNA-binding spans 364 to 468; that stretch reads DPSLLDLRVG…SGSAPGERIY (105 aa).

This sequence belongs to the class-I aminoacyl-tRNA synthetase family. As to quaternary structure, homodimer.

It localises to the cytoplasm. The protein resides in the nucleus. It catalyses the reaction tRNA(Tyr) + L-tyrosine + ATP = L-tyrosyl-tRNA(Tyr) + AMP + diphosphate + H(+). Its function is as follows. Catalyzes the attachment of tyrosine to tRNA(Tyr) in a two-step reaction: tyrosine is first activated by ATP to form Tyr-AMP and then transferred to the acceptor end of tRNA(Tyr). This chain is Tyrosine--tRNA ligase, cytoplasmic (yars1), found in Xenopus laevis (African clawed frog).